Consider the following 321-residue polypeptide: Cytochrome c biogenesis protein CcsA (321 aa).

Helical transmembrane passes span 17 to 37 (IVSIVITIHLITLLVDEIVGL), 44 to 64 (GMISTFLCITGLLVTRWIYSG), 71 to 91 (LYESLIFLSWSFSIIHMIPYF), 98 to 118 (LSLVTAPSAIFTQGFATSGLL), 143 to 163 (MVLSYGALLCGSLLSVALLVI), 225 to 245 (VISLGFIFLTIGILSGAVWAN), 258 to 275 (ETWAFITWTIFAIYLHTR), and 286 to 306 (AIVASIGFIIIWICYFGVNLL).

The protein belongs to the CcmF/CycK/Ccl1/NrfE/CcsA family. In terms of assembly, may interact with Ccs1.

The protein localises to the plastid. The protein resides in the chloroplast thylakoid membrane. Required during biogenesis of c-type cytochromes (cytochrome c6 and cytochrome f) at the step of heme attachment. The protein is Cytochrome c biogenesis protein CcsA of Buxus microphylla (Littleleaf boxwood).